The following is a 491-amino-acid chain: Katanin p60 ATPase-containing subunit A1 (491 aa).

The tract at residues methionine 1–tyrosine 29 is interaction with KATNB1. Residues methionine 1–serine 75 are interaction with dynein and NDEL1. An interaction with microtubules region spans residues methionine 1 to threonine 185. At serine 42 the chain carries Phosphoserine; by DYRK2. Residues glutamine 87–aspartate 183 form a disordered region. Positions histidine 145–lysine 169 are enriched in basic and acidic residues. Glycine 249–threonine 256 is an ATP binding site.

This sequence belongs to the AAA ATPase family. Katanin p60 subunit A1 subfamily. As to quaternary structure, can homooligomerize into hexameric rings, which may be promoted by interaction with microtubules. Interacts with KATNB1, which may serve as a targeting subunit. Interacts with ASPM; the katanin complex formation KATNA1:KATNB1 is required for the association of ASPM. Interacts with dynein and NDEL1. Associates with the E3 ligase complex containing DYRK2, EDD/UBR5, DDB1 and DCAF1 proteins (EDVP complex). Interacts with KLHL42 (via the kelch domains). Interacts with CUL3; the interaction is enhanced by KLHL42. Interacts with KATNB1 and KATNBL1. Post-translationally, phosphorylation by DYRK2 triggers ubiquitination and subsequent degradation. In terms of processing, ubiquitinated by the BCR(KLHL42) E3 ubiquitin ligase complex, leading to its proteasomal degradation. Ubiquitinated by the EDVP E3 ligase complex and subsequently targeted for proteasomal degradation.

It is found in the cytoplasm. The protein resides in the midbody. Its subcellular location is the cytoskeleton. The protein localises to the microtubule organizing center. It localises to the centrosome. It is found in the spindle pole. The protein resides in the spindle. It carries out the reaction n ATP + n H2O + a microtubule = n ADP + n phosphate + (n+1) alpha/beta tubulin heterodimers.. Its activity is regulated as follows. ATPase activity is stimulated by microtubules, which promote homooligomerization. ATP-dependent microtubule severing is stimulated by interaction with KATNB1. In terms of biological role, catalytic subunit of a complex which severs microtubules in an ATP-dependent manner. Microtubule severing may promote rapid reorganization of cellular microtubule arrays and the release of microtubules from the centrosome following nucleation. Microtubule release from the mitotic spindle poles may allow depolymerization of the microtubule end proximal to the spindle pole, leading to poleward microtubule flux and poleward motion of chromosome. Microtubule release within the cell body of neurons may be required for their transport into neuronal processes by microtubule-dependent motor proteins. This transport is required for axonal growth. This Rattus norvegicus (Rat) protein is Katanin p60 ATPase-containing subunit A1 (Katna1).